Here is a 186-residue protein sequence, read N- to C-terminus: ATP synthase subunit delta (186 aa).

Belongs to the ATPase delta chain family. As to quaternary structure, F-type ATPases have 2 components, F(1) - the catalytic core - and F(0) - the membrane proton channel. F(1) has five subunits: alpha(3), beta(3), gamma(1), delta(1), epsilon(1). CF(0) has four main subunits: a(1), b(1), b'(1) and c(10-14). The alpha and beta chains form an alternating ring which encloses part of the gamma chain. F(1) is attached to F(0) by a central stalk formed by the gamma and epsilon chains, while a peripheral stalk is formed by the delta, b and b' chains.

The protein resides in the cell inner membrane. In terms of biological role, f(1)F(0) ATP synthase produces ATP from ADP in the presence of a proton or sodium gradient. F-type ATPases consist of two structural domains, F(1) containing the extramembraneous catalytic core and F(0) containing the membrane proton channel, linked together by a central stalk and a peripheral stalk. During catalysis, ATP synthesis in the catalytic domain of F(1) is coupled via a rotary mechanism of the central stalk subunits to proton translocation. Functionally, this protein is part of the stalk that links CF(0) to CF(1). It either transmits conformational changes from CF(0) to CF(1) or is implicated in proton conduction. The chain is ATP synthase subunit delta from Rhodopseudomonas palustris (strain HaA2).